The following is a 1266-amino-acid chain: Rho GTPase-activating protein 29 (1266 aa).

Ser-166, Ser-171, Ser-174, and Ser-185 each carry phosphoserine. An F-BAR domain is found at 187–457 (IELDNLLLKN…SAKLYDPGQE (271 aa)). Residues 291–413 (RKNEMEKQRK…EILTQLRTLV (123 aa)) are a coiled coil. Ser-496, Ser-516, and Ser-549 each carry phosphoserine. Over residues 538–556 (SESTGGSSESRSLDSESIS) the composition is skewed to low complexity. Positions 538 to 596 (SESTGGSSESRSLDSESISPGDFHRKLPRTPSSGTMSSADDLDEREPPSPSEAGPNSLG) are disordered. A Phorbol-ester/DAG-type zinc finger spans residues 609–654 (THKFRKLRSPTKCRDCEGIVMFPGVECEECLLVCHRKCLENLVIVC). Residues 668 to 883 (AEFIQVAKKE…FLITYAQKIF (216 aa)) form the Rho-GAP domain. Phosphoserine is present on residues Ser-915, Ser-951, and Ser-1023. 3 disordered regions span residues 1033–1054 (AGSPTERSSRNTGNTDSDKFGK), 1114–1153 (VSTGNNRGHSSGAAQPSKAHADPARSARDTSEHSSSDSCP), and 1222–1248 (VQTSGQPKESSEEPGLPEGTPTCQRPR). The segment covering 1115 to 1127 (STGNNRGHSSGAA) has biased composition (polar residues). Over residues 1132–1148 (AHADPARSARDTSEHSS) the composition is skewed to basic and acidic residues. 2 positions are modified to phosphoserine: Ser-1149 and Ser-1151. The interval 1263–1266 (PQFV) is interaction with PTPN13/PTPL1.

Interacts with PTPN13/PTPL1. Interacts with RAP2A via its coiled coil domain. Interacts with RASIP1.

Its function is as follows. GTPase activator for the Rho-type GTPases by converting them to an inactive GDP-bound state. Has strong activity toward RHOA, and weaker activity toward RAC1 and CDC42. May act as a specific effector of RAP2A to regulate Rho. In concert with RASIP1, suppresses RhoA signaling and dampens ROCK and MYH9 activities in endothelial cells and plays an essential role in blood vessel tubulogenesis. This Rattus norvegicus (Rat) protein is Rho GTPase-activating protein 29 (Arhgap29).